The chain runs to 177 residues: Large ribosomal subunit protein uL6 (177 aa).

This sequence belongs to the universal ribosomal protein uL6 family. In terms of assembly, part of the 50S ribosomal subunit.

Functionally, this protein binds to the 23S rRNA, and is important in its secondary structure. It is located near the subunit interface in the base of the L7/L12 stalk, and near the tRNA binding site of the peptidyltransferase center. In Bartonella bacilliformis (strain ATCC 35685 / KC583 / Herrer 020/F12,63), this protein is Large ribosomal subunit protein uL6.